The chain runs to 192 residues: uncharacterized protein (192 aa).

This is an uncharacterized protein from Picosynechococcus sp. (strain ATCC 27264 / PCC 7002 / PR-6) (Agmenellum quadruplicatum).